The chain runs to 242 residues: Transcriptional activator protein RaiR (242 aa).

The 66-residue stretch at Lys177–Asn242 folds into the HTH luxR-type domain. Residues Ala201–Ala220 constitute a DNA-binding region (H-T-H motif).

Belongs to the autoinducer-regulated transcriptional regulatory protein family.

This is Transcriptional activator protein RaiR (raiR) from Rhizobium etli.